The chain runs to 374 residues: MSRVPSPPPPAEMTSGPVAESWCYTQIKVVKFSYMWTINNFSFCREEMGEVIKSSTFSSGANDKLKWCLRVNPKGLDEESKDYLSLYLLLVSCPKSEVRAKFKFSILNAKGEETKAMESQRAYRFVQGKDWGFKKFIRRDFLLDEANGLLPDDKLTLFCEVSVVQDSVNISGQNTMNMVKVPDCRLADELGGLWEHSRFTDCSLCVAGQEFQAHKAILAARSPVFSAMFEHEMEESKKNRVEINDVEAEVFKEMMFFIYTGKAPNLDKMADDLLAAADKYALERLKVMCEDALCTSLSVENAAEILILADLHSADQLKTQAVDFINYHASDVMETSGWKSMVASHPHLVAEAYRSLASAQCPFLGPPRKRLKQS.

The 131-residue stretch at 31–161 folds into the MATH domain; sequence KFSYMWTINN…DDKLTLFCEV (131 aa). Residues 71–191 are required for nuclear localization; sequence VNPKGLDEES…PDCRLADELG (121 aa). The region spanning 173–297 is the BTB domain; that stretch reads QNTMNMVKVP…MCEDALCTSL (125 aa). Positions 297 to 355 are homodimerization; sequence LSVENAAEILILADLHSADQLKTQAVDFINYHASDVMETSGWKSMVASHPHLVAEAYRS.

The protein belongs to the Tdpoz family. As to quaternary structure, homodimer. Part of cullin-RING-based BCR (BTB-CUL3-RBX1) E3 ubiquitin-protein ligase complexes that contain CUL3 and SPOP, plus a target protein.

It localises to the nucleus. The protein localises to the nucleus speckle. It participates in protein modification; protein ubiquitination. Component of a cullin-RING-based BCR (BTB-CUL3-RBX1) E3 ubiquitin-protein ligase complex that mediates the ubiquitination of target proteins, leading most often to their proteasomal degradation. This chain is Speckle-type POZ protein (spop), found in Danio rerio (Zebrafish).